Consider the following 260-residue polypeptide: Membrane protein insertase YidC 1 (260 aa).

Residues 1 to 22 (MLKSYRAVLVSLSLLFVFVLSG) form the signal peptide. Residue cysteine 23 is the site of N-palmitoyl cysteine attachment. Cysteine 23 carries S-diacylglycerol cysteine lipidation. Transmembrane regions (helical) follow at residues 29-49 (IDAHSTGIWDHYFVYPISFMI), 52-72 (VAHHIPGASFGIAIIIMTLVI), 133-153 (LAGCWPLLIQMPIFSALYYAI), 164-184 (FLWVNLGHADPYHILPIIAAL), and 213-233 (MPAMILFMGFAAPSGLVLYWI).

The protein belongs to the OXA1/ALB3/YidC family. Type 2 subfamily.

The protein localises to the cell membrane. Functionally, required for the insertion and/or proper folding and/or complex formation of integral membrane proteins into the membrane. Involved in integration of membrane proteins that insert both dependently and independently of the Sec translocase complex, as well as at least some lipoproteins. This Bacillus cereus (strain ATCC 14579 / DSM 31 / CCUG 7414 / JCM 2152 / NBRC 15305 / NCIMB 9373 / NCTC 2599 / NRRL B-3711) protein is Membrane protein insertase YidC 1.